The following is a 29-amino-acid chain: Small toxic protein TisB (29 aa).

Residues 6-28 (IAILILKLIVAALQLLDAVLKYL) form a helical membrane-spanning segment.

The protein resides in the cell inner membrane. Functionally, toxic component of a type I toxin-antitoxin (TA) system. Overexpression causes cessation of growth, induces stress-response, a number of membrane protein genes, and leads to cell death. Inhibits ATP synthesis, ATP levels drop drastically quickly after induction. Part of the programmed response to DNA damage; damage leads to increased accumulation of the protein which slows or stops bacterial growth, probably allowing DNA repair before cells continue to grow. The chain is Small toxic protein TisB (tisB) from Escherichia coli (strain K12).